We begin with the raw amino-acid sequence, 121 residues long: Small ribosomal subunit protein uS13 (121 aa).

Positions 93 to 121 are disordered; sequence RGLPMRGQRTRTNARTRKGPRKAAQSLKK.

It belongs to the universal ribosomal protein uS13 family. In terms of assembly, part of the 30S ribosomal subunit. Forms a loose heterodimer with protein S19. Forms two bridges to the 50S subunit in the 70S ribosome.

Functionally, located at the top of the head of the 30S subunit, it contacts several helices of the 16S rRNA. In the 70S ribosome it contacts the 23S rRNA (bridge B1a) and protein L5 of the 50S subunit (bridge B1b), connecting the 2 subunits; these bridges are implicated in subunit movement. Contacts the tRNAs in the A and P-sites. In Variovorax paradoxus (strain S110), this protein is Small ribosomal subunit protein uS13.